The chain runs to 415 residues: MKRTVILLLDSFGVGGAADADKFIGSLADGSQYDDMGSNTLGHIAEQCAKGNANEGRHGPLTIPNLNKLGFGRACAESSSTFPAGLDPLVEPIAAYGYAKEISTAKDTSSGHWEITGVPVLFDWGYFDKKQNSFPQELLDELVERADLPGYLGNCHASGTTILEDLGEEHLKTGKPIFYTSADSVFQIACHEETFGLERLYKLCELTRELVNKYNIGRVIARPFSGSASSNFMRTGNRHDYSVKPPSPTLLESMKESGGQVVSIGKISDIFAEQGITKATKANGLEALFDASLNELKQAGDQTIIFTNFVNFDADFGHRRNLPGYAAALEYFDKRLPEMLALMTEDDLLVLTADHGCDPTWKGTDHTREHIPAIFYGHAVKPGPIGLRETFADIGQSIADFHKLPALAYGKSIFS.

Mn(2+) contacts are provided by aspartate 10, aspartate 313, histidine 318, aspartate 354, histidine 355, and histidine 366.

The protein belongs to the phosphopentomutase family. The cofactor is Mn(2+).

The protein resides in the cytoplasm. The enzyme catalyses 2-deoxy-alpha-D-ribose 1-phosphate = 2-deoxy-D-ribose 5-phosphate. The catalysed reaction is alpha-D-ribose 1-phosphate = D-ribose 5-phosphate. It participates in carbohydrate degradation; 2-deoxy-D-ribose 1-phosphate degradation; D-glyceraldehyde 3-phosphate and acetaldehyde from 2-deoxy-alpha-D-ribose 1-phosphate: step 1/2. Its function is as follows. Isomerase that catalyzes the conversion of deoxy-ribose 1-phosphate (dRib-1-P) and ribose 1-phosphate (Rib-1-P) to deoxy-ribose 5-phosphate (dRib-5-P) and ribose 5-phosphate (Rib-5-P), respectively. This chain is Phosphopentomutase, found in Psychromonas ingrahamii (strain DSM 17664 / CCUG 51855 / 37).